The following is a 478-amino-acid chain: Pathogenicity cluster 5 protein d (478 aa).

A signal peptide spans 1-19 (MQIQNLIAALAGMAVVAEA). 2 disordered regions span residues 35-89 (RQNK…GQAN) and 299-400 (NGGK…GGKG). The span at 38 to 64 (KGGNNNNNNNNNNNNNNNNNKNNGGNN) shows a compositional bias: low complexity. The segment covering 65–89 (QLCLNPNNVQKGSQQAGTPKQGQAN) has biased composition (polar residues). Residues 316 to 326 (NNDGGGGGNDG) show a composition bias toward gly residues. 2 stretches are compositionally biased toward low complexity: residues 327–348 (GNNS…QNGA) and 379–393 (TQAG…TNGN). N-linked (GlcNAc...) asparagine glycosylation is found at N328 and N332.

It is found in the secreted. Functionally, secreted protein required for appressorial penetration of intact host epidermal cells and for pathogenicit, but not for subsequent biotrophic and necrotrophic colonization of leaves. The chain is Pathogenicity cluster 5 protein d from Colletotrichum graminicola (strain M1.001 / M2 / FGSC 10212) (Maize anthracnose fungus).